The chain runs to 74 residues: CLAVATA3/ESR (CLE)-related protein 1 (74 aa).

The signal sequence occupies residues 1–22; the sequence is MANLKFLLCLFLICVSLSRSSA. N59 carries N-linked (GlcNAc...) asparagine glycosylation. P66 and P69 each carry hydroxyproline. O-linked (Ara...) hydroxyproline glycosylation occurs at P69.

The protein belongs to the CLV3/ESR signal peptide family. In terms of processing, the O-glycosylation (arabinosylation) of the hydroxyproline Pro-69 enhances binding affinity of the CLE1p peptide for its receptor. Mostly expressed in roots and seedlings, and, to a lower extent, in stems and apex.

The protein resides in the secreted. The protein localises to the extracellular space. Extracellular signal peptide that regulates cell fate. The chain is CLAVATA3/ESR (CLE)-related protein 1 from Arabidopsis thaliana (Mouse-ear cress).